Here is a 216-residue protein sequence, read N- to C-terminus: Vesicle-associated membrane protein 7A (216 aa).

The Cytoplasmic portion of the chain corresponds to 1-189; the sequence is MSQTDILYAC…KRKLWWQNKK (189 aa). The Longin domain maps to 6-112; the sequence is ILYACVSYKG…ATYDPFIRVL (107 aa). In terms of domain architecture, v-SNARE coiled-coil homology spans 126 to 186; it reads KMNLVMDQVS…VALKRKLWWQ (61 aa). A helical; Anchor for type IV membrane protein membrane pass occupies residues 190 to 210; that stretch reads LAIAIGLVVCILIAVITLALL. Topologically, residues 211 to 216 are vesicular; it reads KYFKVI.

It belongs to the synaptobrevin family. As to quaternary structure, component of the SNARE complex composed of syn7A, syn8A, vamp7A and vti1A.

Its subcellular location is the cytoplasmic vesicle. The protein localises to the secretory vesicle membrane. The protein resides in the golgi apparatus. It localises to the trans-Golgi network membrane. It is found in the late endosome membrane. Its subcellular location is the lysosome membrane. The protein localises to the endoplasmic reticulum membrane. The protein resides in the phagosome membrane. Its function is as follows. Involved in the targeting and/or fusion of transport vesicles to their target membrane during transport of proteins from the early endosome to the lysosome. Required for heterotypic fusion of late endosomes with lysosomes and homotypic lysosomal fusion. Required for calcium regulated lysosomal exocytosis. In Dictyostelium discoideum (Social amoeba), this protein is Vesicle-associated membrane protein 7A.